The sequence spans 121 residues: Ribonuclease P protein component (121 aa).

Belongs to the RnpA family. Consists of a catalytic RNA component (M1 or rnpB) and a protein subunit.

It catalyses the reaction Endonucleolytic cleavage of RNA, removing 5'-extranucleotides from tRNA precursor.. RNaseP catalyzes the removal of the 5'-leader sequence from pre-tRNA to produce the mature 5'-terminus. It can also cleave other RNA substrates such as 4.5S RNA. The protein component plays an auxiliary but essential role in vivo by binding to the 5'-leader sequence and broadening the substrate specificity of the ribozyme. This chain is Ribonuclease P protein component, found in Oceanobacillus iheyensis (strain DSM 14371 / CIP 107618 / JCM 11309 / KCTC 3954 / HTE831).